Consider the following 137-residue polypeptide: Large ribosomal subunit protein uL16 (137 aa).

The protein belongs to the universal ribosomal protein uL16 family. As to quaternary structure, part of the 50S ribosomal subunit.

Its function is as follows. Binds 23S rRNA and is also seen to make contacts with the A and possibly P site tRNAs. This chain is Large ribosomal subunit protein uL16, found in Azotobacter vinelandii (strain DJ / ATCC BAA-1303).